The following is a 598-amino-acid chain: UvrABC system protein C (598 aa).

In terms of domain architecture, GIY-YIG spans 14 to 91 (DQPGCYLMKD…IHKNNPKYNI (78 aa)). The UVR domain occupies 196–231 (TEIQDRLQEKMAYAAAHMEFEKAAEFRDQIKAIETV).

Belongs to the UvrC family. In terms of assembly, interacts with UvrB in an incision complex.

The protein resides in the cytoplasm. Functionally, the UvrABC repair system catalyzes the recognition and processing of DNA lesions. UvrC both incises the 5' and 3' sides of the lesion. The N-terminal half is responsible for the 3' incision and the C-terminal half is responsible for the 5' incision. This Enterococcus faecalis (strain ATCC 700802 / V583) protein is UvrABC system protein C.